A 409-amino-acid chain; its full sequence is Elongation factor Tu (409 aa).

Positions 10-214 constitute a tr-type G domain; it reads KPHVNVGTIG…AVDSYIPTPE (205 aa). The tract at residues 19-26 is G1; sequence GHVDHGKT. 19–26 provides a ligand contact to GTP; that stretch reads GHVDHGKT. Residue T26 coordinates Mg(2+). The segment at 60 to 64 is G2; that stretch reads GITIN. Positions 81 to 84 are G3; it reads DCPG. GTP contacts are provided by residues 81–85 and 136–139; these read DCPGH and NKAD. Residues 136–139 form a G4 region; that stretch reads NKAD. A G5 region spans residues 174-176; sequence SAL.

Belongs to the TRAFAC class translation factor GTPase superfamily. Classic translation factor GTPase family. EF-Tu/EF-1A subfamily. As to quaternary structure, monomer.

It is found in the cytoplasm. The catalysed reaction is GTP + H2O = GDP + phosphate + H(+). Functionally, GTP hydrolase that promotes the GTP-dependent binding of aminoacyl-tRNA to the A-site of ribosomes during protein biosynthesis. The sequence is that of Elongation factor Tu from Synechococcus sp. (strain JA-2-3B'a(2-13)) (Cyanobacteria bacterium Yellowstone B-Prime).